Here is a 223-residue protein sequence, read N- to C-terminus: Phosphoribosylformylglycinamidine synthase subunit PurQ (223 aa).

One can recognise a Glutamine amidotransferase type-1 domain in the interval 3 to 223; that stretch reads FAVLVFPGSN…MVKSWREQNV (221 aa). The Nucleophile role is filled by cysteine 85. Catalysis depends on residues histidine 193 and glutamate 195.

In terms of assembly, part of the FGAM synthase complex composed of 1 PurL, 1 PurQ and 2 PurS subunits.

It is found in the cytoplasm. It catalyses the reaction N(2)-formyl-N(1)-(5-phospho-beta-D-ribosyl)glycinamide + L-glutamine + ATP + H2O = 2-formamido-N(1)-(5-O-phospho-beta-D-ribosyl)acetamidine + L-glutamate + ADP + phosphate + H(+). The catalysed reaction is L-glutamine + H2O = L-glutamate + NH4(+). The protein operates within purine metabolism; IMP biosynthesis via de novo pathway; 5-amino-1-(5-phospho-D-ribosyl)imidazole from N(2)-formyl-N(1)-(5-phospho-D-ribosyl)glycinamide: step 1/2. Part of the phosphoribosylformylglycinamidine synthase complex involved in the purines biosynthetic pathway. Catalyzes the ATP-dependent conversion of formylglycinamide ribonucleotide (FGAR) and glutamine to yield formylglycinamidine ribonucleotide (FGAM) and glutamate. The FGAM synthase complex is composed of three subunits. PurQ produces an ammonia molecule by converting glutamine to glutamate. PurL transfers the ammonia molecule to FGAR to form FGAM in an ATP-dependent manner. PurS interacts with PurQ and PurL and is thought to assist in the transfer of the ammonia molecule from PurQ to PurL. The protein is Phosphoribosylformylglycinamidine synthase subunit PurQ of Staphylococcus epidermidis (strain ATCC 35984 / DSM 28319 / BCRC 17069 / CCUG 31568 / BM 3577 / RP62A).